Reading from the N-terminus, the 278-residue chain is Ras-related protein Rab-40B (278 aa).

Positions 23, 26, and 27 each coordinate GTP. A switch-I region spans residues 41–49 (SPYGHPAGI). Residue Asp-69 participates in Mg(2+) binding. Residues Gly-72, Asn-126, and Arg-127 each coordinate GTP. The segment at 72–88 (GQGRFCTIFRSYSRGAQ) is switch-II. In terms of domain architecture, SOCS box spans 175 to 228 (LLRHGMDRLWRPSKVLSLQELCCRAVVSCTPGHLVDKLPLPVALRSHLKSFSMA). Positions 245–278 (ANSSHKRNSFRKVRTIRPPQSPPRNCARNSCKIS) are disordered. Over residues 248–259 (SHKRNSFRKVRT) the composition is skewed to basic residues. A lipid anchor (S-palmitoyl cysteine) is attached at Cys-270. Cys-275 carries S-geranylgeranyl cysteine lipidation.

The protein belongs to the small GTPase superfamily. Rab family. In terms of assembly, component of the cullin-5-RING E3 ubiquitin-protein ligase complex (ECS(RAB40B) complex) composed of CUL5, Elongin BC (ELOB and ELOC), RNF7/RBX2 and RAB40B; RAB40B interaction with ECS complex is GTP-independent. Binds (GTP-bound) LIMA1; interaction promotes LIMA1 subcellular localization in lamellipodia during cell migration. Interacts (GTP-bound) with TKS5/SH3PXD2A (via PX domain); interaction promotes invadopodia-mediated extracellular matrix degradation. It depends on Mg(2+) as a cofactor.

It is found in the cell membrane. The protein resides in the cytoplasm. It localises to the cytosol. Its subcellular location is the cell projection. The protein localises to the lamellipodium membrane. It is found in the ruffle. The enzyme catalyses GTP + H2O = GDP + phosphate + H(+). The protein operates within protein modification; protein ubiquitination. With respect to regulation, regulated by guanine nucleotide exchange factors (GEFs) which promote the exchange of bound GDP for free GTP. Regulated by GTPase activating proteins (GAPs) which increase the GTP hydrolysis activity. Inhibited by GDP dissociation inhibitors (GDIs). Its function is as follows. RAB40B small GTPase acts as substrate-recognition components of the ECS(RAB40B) E3 ubiquitin ligase complex which mediates the ubiquitination of target proteins. The Rab40 subfamily belongs to the Rab family that are key regulators of intracellular membrane trafficking, from the formation of transport vesicles to their fusion with membranes. Rabs cycle between an inactive GDP-bound form and an active GTP-bound form that is able to recruit to membranes different sets of downstream effectors directly responsible for vesicle formation, movement, tethering and fusion. As part of the ECS(RAB40B) complex, GTP-bound RAB40B promotes LIMA1/EPLIN ubiquitination and degradation, thereby regulating leading-edge actin dynamics during cell migration. As part of the ECS(RAB40B) complex, GTP-bound RAB40B also ubiquitinates RAP2A GTPase which promotes its localization to lamellipodia and activation to drive cell migration. The ECS(RAB40B) complex does not mediate canonical ubiquitin-dependent degradation of RAP2. RAB40B also binds TKS5/SH3PXD2A effector independently from ECS complex to promote invadopodia-mediated extracellular matrix degradation. The polypeptide is Ras-related protein Rab-40B (Mus musculus (Mouse)).